The primary structure comprises 192 residues: Adenylate kinase (192 aa).

12–17 (GSGKTT) contacts ATP. The tract at residues 33 to 62 (STGDLLRAEVAKDSELGKKIDKIISGGNLV) is NMP. AMP-binding positions include T34, R39, 60–62 (NLV), 87–90 (GYPR), and Q94. The tract at residues 129 to 135 (GRARGAD) is LID. R130 lines the ATP pocket. AMP contacts are provided by R132 and R144. Residue R172 coordinates ATP.

Belongs to the adenylate kinase family. In terms of assembly, monomer.

It localises to the cytoplasm. The catalysed reaction is AMP + ATP = 2 ADP. The protein operates within purine metabolism; AMP biosynthesis via salvage pathway; AMP from ADP: step 1/1. In terms of biological role, catalyzes the reversible transfer of the terminal phosphate group between ATP and AMP. Plays an important role in cellular energy homeostasis and in adenine nucleotide metabolism. This is Adenylate kinase from Campylobacter hominis (strain ATCC BAA-381 / DSM 21671 / CCUG 45161 / LMG 19568 / NCTC 13146 / CH001A).